A 151-amino-acid chain; its full sequence is UPF0208 membrane protein NT01EI_2692 (151 aa).

2 helical membrane passes run 46–65 (FAIR…QIAL) and 69–91 (LGPA…WWLG).

It belongs to the UPF0208 family.

It localises to the cell inner membrane. The chain is UPF0208 membrane protein NT01EI_2692 from Edwardsiella ictaluri (strain 93-146).